A 133-amino-acid chain; its full sequence is ATP synthase epsilon chain, chloroplastic (133 aa).

It belongs to the ATPase epsilon chain family. F-type ATPases have 2 components, CF(1) - the catalytic core - and CF(0) - the membrane proton channel. CF(1) has five subunits: alpha(3), beta(3), gamma(1), delta(1), epsilon(1). CF(0) has three main subunits: a, b and c.

It localises to the plastid. Its subcellular location is the chloroplast thylakoid membrane. In terms of biological role, produces ATP from ADP in the presence of a proton gradient across the membrane. In Thalassiosira pseudonana (Marine diatom), this protein is ATP synthase epsilon chain, chloroplastic.